The following is a 220-amino-acid chain: ATP-dependent dethiobiotin synthetase BioD (220 aa).

Residue 13-18 (EVGKTV) coordinates ATP. Residue Thr-17 participates in Mg(2+) binding. Residue Lys-38 is part of the active site. Ser-42 lines the substrate pocket. ATP contacts are provided by residues Asp-55, 116-119 (EGAG), 176-177 (NR), and Asn-212. Mg(2+) is bound by residues Asp-55 and Glu-116.

Belongs to the dethiobiotin synthetase family. Homodimer. Mg(2+) is required as a cofactor.

It localises to the cytoplasm. The catalysed reaction is (7R,8S)-7,8-diammoniononanoate + CO2 + ATP = (4R,5S)-dethiobiotin + ADP + phosphate + 3 H(+). It functions in the pathway cofactor biosynthesis; biotin biosynthesis; biotin from 7,8-diaminononanoate: step 1/2. Its function is as follows. Catalyzes a mechanistically unusual reaction, the ATP-dependent insertion of CO2 between the N7 and N8 nitrogen atoms of 7,8-diaminopelargonic acid (DAPA, also called 7,8-diammoniononanoate) to form a ureido ring. In Photobacterium profundum (strain SS9), this protein is ATP-dependent dethiobiotin synthetase BioD.